The chain runs to 249 residues: 2,3-bisphosphoglycerate-dependent phosphoglycerate mutase (249 aa).

Residues 9–16 (RHGQSQWN), 22–23 (TG), arginine 61, 88–91 (ERHY), lysine 99, 115–116 (RR), and 184–185 (GN) contribute to the substrate site. Histidine 10 functions as the Tele-phosphohistidine intermediate in the catalytic mechanism. The Proton donor/acceptor role is filled by glutamate 88.

It belongs to the phosphoglycerate mutase family. BPG-dependent PGAM subfamily. As to quaternary structure, homodimer.

The enzyme catalyses (2R)-2-phosphoglycerate = (2R)-3-phosphoglycerate. It participates in carbohydrate degradation; glycolysis; pyruvate from D-glyceraldehyde 3-phosphate: step 3/5. Functionally, catalyzes the interconversion of 2-phosphoglycerate and 3-phosphoglycerate. In Xylella fastidiosa (strain M23), this protein is 2,3-bisphosphoglycerate-dependent phosphoglycerate mutase.